The chain runs to 389 residues: Type III polyketide synthase 21 (389 aa).

Catalysis depends on Cys-170, which acts as the Nucleophile.

Belongs to the thiolase-like superfamily. Chalcone/stilbene synthases family. As to expression, expressed in anthers. Expressed in young and adult flowers.

Functionally, plant type III polyketide synthases (PKSs) that catalyzes the condensation of fatty acyl-CoA with malonyl-CoA to generate triketide and tetraketide alpha-pyrones, the main components of pollen exine and potential sporopollenin precursors. This is Type III polyketide synthase 21 (PKS21) from Oryza sativa subsp. japonica (Rice).